A 438-amino-acid chain; its full sequence is MKIALIDGEHYPDVVKWALDKLGNVCCAVFLGGSEKIGSLEEVERRLGVPIYRHDDYLTALARALAENPGVKEVVDLSDEPIVGYEDRFRIASLCLLHGVTYRGADFVFKPRPLNRTSKPSIGVIGTGKRVGKTAVSGFVARTLKAITRPVIVTMGRGGPEEPELIDGEKLEITPEFLLRIAESGRHAASDHFEDALTSRVTTIGCRRCGGGMAGFPFFDAVDRGISLAESLPHDLIILEGSGATFPPYRADAYVVVVGARQELSSIANYFGPFRLSLADLVVVTMADLVKEEKIEKIVGVVEGVIPRAEVHVTVFRPRPLGDVSGKRIGLVMTSEEALESSARHLEALGAEVLHSSGNLSRRKALLRDLEGFSGIEGIAVELKAAAVDVVTRWALERGIEVIYLDNEPVNIDGKNLREAVLRLGKKVLGRRADDTRR.

Belongs to the cyclic 2,3-diphosphoglycerate synthetase family.

The protein localises to the cytoplasm. The enzyme catalyses (2R)-2,3-bisphosphoglycerate + ATP + H(+) = cyclic (2R)-2,3-bisphosphoglycerate + ADP + phosphate. Functionally, catalyzes the formation of cyclic 2,3-diphosphoglycerate (cDPG) by formation of an intramolecular phosphoanhydride bond at the expense of ATP. The polypeptide is Cyclic 2,3-diphosphoglycerate synthetase (Thermococcus gammatolerans (strain DSM 15229 / JCM 11827 / EJ3)).